A 354-amino-acid polypeptide reads, in one-letter code: UDP-galactose transporter homolog 1 (354 aa).

5 helical membrane-spanning segments follow: residues 6-26 (GGSI…FLTW), 54-74 (LVIN…YSVV), 95-112 (FFKS…SSPL), 123-143 (LAYL…HFVL), and 148-168 (FPLY…IFTL). The N-linked (GlcNAc...) asparagine glycan is linked to Asn-202. Transmembrane regions (helical) follow at residues 227–247 (YLMC…ALIF), 268–288 (MNIL…FIIL), 295–317 (ILIT…LFGH), and 321–340 (GLQW…EALV).

This sequence belongs to the nucleotide-sugar transporter family. SLC35B subfamily.

The protein localises to the endoplasmic reticulum membrane. Its function is as follows. May be involved in specific transport of UDP-Gal from the cytosol to the Golgi lumen. Involved in the maintenance of optimal conditions for the folding of secretory pathway proteins in the endoplasmic reticulum. The polypeptide is UDP-galactose transporter homolog 1 (HUT1) (Debaryomyces hansenii (strain ATCC 36239 / CBS 767 / BCRC 21394 / JCM 1990 / NBRC 0083 / IGC 2968) (Yeast)).